Here is a 270-residue protein sequence, read N- to C-terminus: Regulatory protein RecX (270 aa).

Belongs to the RecX family.

It is found in the cytoplasm. Functionally, modulates RecA activity. In Bacillus cereus (strain AH187), this protein is Regulatory protein RecX.